The primary structure comprises 286 residues: Aminoglycoside N(3)-acetyltransferase III (286 aa).

Belongs to the antibiotic N-acetyltransferase family.

It carries out the reaction a 2-deoxystreptamine antibiotic + acetyl-CoA = an N(3)-acetyl-2-deoxystreptamine antibiotic + CoA + H(+). Resistance to antibiotics containing the 2-deoxy-streptamine ring including gentamicin, kanamycin, tobramycin, neomycin and apramycin. This chain is Aminoglycoside N(3)-acetyltransferase III (aacC2), found in Acinetobacter baumannii.